The following is a 266-amino-acid chain: Apolipoprotein A-I (266 aa).

Positions 1–18 (MKAVVLTLAVLFLTGSQA) are cleaved as a signal peptide. 2 repeat units span residues 67-88 (LKLL…EQIG) and 89-110 (PVTQ…QEMS). Positions 67-266 (LKLLDNWDSL…DEAAKKLNAQ (200 aa)) are 10 X approximate tandem repeats. The residue at position 109 (Met-109) is a Methionine sulfoxide. The 3; half-length repeat unit spans residues 111–121 (KDLEEVKQKVQ). Tandem repeats lie at residues 122–142 (PYLD…RQKV), 144–165 (PLGA…EKLS), 166–187 (PLGE…AQLA), 188–210 (PYSD…DGGA), and 211–231 (SLAE…EKAK). One copy of the 9; half-length repeat lies at 232–242 (PALEDLRQGLL). Copy 10 of the repeat occupies 243-266 (PVLESFKVSLLAAVDEAAKKLNAQ).

This sequence belongs to the apolipoprotein A1/A4/E family. Homodimer. Interacts with APOA1BP and CLU. Component of a sperm activating protein complex (SPAP), consisting of APOA1, an immunoglobulin heavy chain, an immunoglobulin light chain and albumin. Interacts with NDRG1. Interacts with SCGB3A2. Interacts with NAXE and YJEFN3. Post-translationally, glycosylated. In terms of processing, palmitoylated. Phosphorylation sites are present in the extracellular medium. Major protein of plasma HDL, also found in chylomicrons.

Its subcellular location is the secreted. Participates in the reverse transport of cholesterol from tissues to the liver for excretion by promoting cholesterol efflux from tissues and by acting as a cofactor for the lecithin cholesterol acyltransferase (LCAT). As part of the SPAP complex, activates spermatozoa motility. The protein is Apolipoprotein A-I (APOA1) of Ailuropoda melanoleuca (Giant panda).